The following is a 207-amino-acid chain: Ribosomal RNA small subunit methyltransferase G (207 aa).

S-adenosyl-L-methionine is bound by residues glycine 76, glutamine 81, 127–128 (VE), and arginine 141.

It belongs to the methyltransferase superfamily. RNA methyltransferase RsmG family.

It is found in the cytoplasm. The enzyme catalyses guanosine(527) in 16S rRNA + S-adenosyl-L-methionine = N(7)-methylguanosine(527) in 16S rRNA + S-adenosyl-L-homocysteine. In terms of biological role, specifically methylates the N7 position of guanine in position 527 of 16S rRNA. The sequence is that of Ribosomal RNA small subunit methyltransferase G from Neisseria meningitidis serogroup A / serotype 4A (strain DSM 15465 / Z2491).